The sequence spans 153 residues: ATP synthase subunit b' (153 aa).

Residues 20–40 traverse the membrane as a helical segment; sequence TLPLMAVQVVLLTFILNALFF.

The protein belongs to the ATPase B chain family. F-type ATPases have 2 components, F(1) - the catalytic core - and F(0) - the membrane proton channel. F(1) has five subunits: alpha(3), beta(3), gamma(1), delta(1), epsilon(1). F(0) has four main subunits: a(1), b(1), b'(1) and c(10-14). The alpha and beta chains form an alternating ring which encloses part of the gamma chain. F(1) is attached to F(0) by a central stalk formed by the gamma and epsilon chains, while a peripheral stalk is formed by the delta, b and b' chains.

It is found in the cellular thylakoid membrane. Its function is as follows. F(1)F(0) ATP synthase produces ATP from ADP in the presence of a proton or sodium gradient. F-type ATPases consist of two structural domains, F(1) containing the extramembraneous catalytic core and F(0) containing the membrane proton channel, linked together by a central stalk and a peripheral stalk. During catalysis, ATP synthesis in the catalytic domain of F(1) is coupled via a rotary mechanism of the central stalk subunits to proton translocation. In terms of biological role, component of the F(0) channel, it forms part of the peripheral stalk, linking F(1) to F(0). The b'-subunit is a diverged and duplicated form of b found in plants and photosynthetic bacteria. This is ATP synthase subunit b' from Prochlorococcus marinus (strain NATL1A).